The primary structure comprises 319 residues: Polyprenyl transferase macG (319 aa).

The next 9 helical transmembrane spans lie at Ala-28–Met-45, Val-48–Ala-68, Ala-106–Gly-126, Pro-127–Lys-147, Phe-152–Ile-172, Ala-182–Thr-202, Val-224–Leu-244, Ser-249–Leu-269, and Leu-289–Ile-309.

It belongs to the UbiA prenyltransferase family. Mg(2+) serves as cofactor.

Its subcellular location is the membrane. It participates in secondary metabolite biosynthesis; terpenoid biosynthesis. Polyprenyl transferase; part of the gene cluster that mediates the biosynthesis of macrophorins, isoprenoid epoxycyclohexenones containing cyclized drimane moieties. The first step of the pathway is the synthesis of 6-methylsalicylic acid (6-MSA) by the polyketide synthase macA. 6-MSA is then converted to m-cresol by the decarboxylase macB. The cytochrome P450 monooxygenase macC then catalyzes the oxidation of m-cresol to toluquinol. Epoxidation of toluquinol is then performed by the short chain dehydrogenase macD, with the help of macE, and a further prenylation by macG leads to 7-deacetoxyyanuthone A. The next step is the hydroxylation of C-22 of 7-deacetoxyyanuthone A by the cytochrome P450 monooxygenase macH to yield 22-deacetylyanuthone A. O-Mevalon transferase macI then attaches mevalon to the hydroxyl group of 22-deacetylyanuthone A to produce yanuthone E. The terpene cyclase macJ catalyzes the cyclization of 22-deacetylyanuthone A to macrophorin A. MacJ is also able to catalyze cyclization of yanuthone E and 7-deacetoxyyanuthone A to their corresponding macrophorins. The macJ products can be further modified by macH and macJ, as well as by the FAD-dependent monooxygenase macF, to produce additional macrophorins, including 4'-oxomacrophorin A, 4'-oxomacrophorin D and 4'-oxomacrophorin E. The chain is Polyprenyl transferase macG from Penicillium terrestre.